An 897-amino-acid chain; its full sequence is Valine--tRNA ligase (897 aa).

Residues 46–56 (PNVTGSLHMGH) carry the 'HIGH' region motif. The 'KMSKS' region motif lies at 532-536 (KMSKT). Lys535 contributes to the ATP binding site. Residues 839–897 (LRRSLEKLDKESGVLAARLDNASYLANAPAELVTESRAKLAEQRAQAAILAEQLARLEN) are a coiled coil.

Belongs to the class-I aminoacyl-tRNA synthetase family. ValS type 1 subfamily. Monomer.

The protein localises to the cytoplasm. It catalyses the reaction tRNA(Val) + L-valine + ATP = L-valyl-tRNA(Val) + AMP + diphosphate. In terms of biological role, catalyzes the attachment of valine to tRNA(Val). As ValRS can inadvertently accommodate and process structurally similar amino acids such as threonine, to avoid such errors, it has a 'posttransfer' editing activity that hydrolyzes mischarged Thr-tRNA(Val) in a tRNA-dependent manner. The sequence is that of Valine--tRNA ligase from Gloeobacter violaceus (strain ATCC 29082 / PCC 7421).